Reading from the N-terminus, the 382-residue chain is Lipoyl synthase, mitochondrial (382 aa).

Residues Met-1 to Leu-30 constitute a mitochondrion transit peptide. The segment covering Ser-25–Asp-34 has biased composition (polar residues). Positions Ser-25 to Thr-46 are disordered. Cys-112, Cys-117, Cys-123, Cys-143, Cys-147, Cys-150, and Ser-359 together coordinate [4Fe-4S] cluster. A Radical SAM core domain is found at Glu-128 to Arg-348.

The protein belongs to the radical SAM superfamily. Lipoyl synthase family. It depends on [4Fe-4S] cluster as a cofactor.

It is found in the mitochondrion. The enzyme catalyses [[Fe-S] cluster scaffold protein carrying a second [4Fe-4S](2+) cluster] + N(6)-octanoyl-L-lysyl-[protein] + 2 oxidized [2Fe-2S]-[ferredoxin] + 2 S-adenosyl-L-methionine + 4 H(+) = [[Fe-S] cluster scaffold protein] + N(6)-[(R)-dihydrolipoyl]-L-lysyl-[protein] + 4 Fe(3+) + 2 hydrogen sulfide + 2 5'-deoxyadenosine + 2 L-methionine + 2 reduced [2Fe-2S]-[ferredoxin]. It participates in protein modification; protein lipoylation via endogenous pathway; protein N(6)-(lipoyl)lysine from octanoyl-[acyl-carrier-protein]: step 2/2. Catalyzes the radical-mediated insertion of two sulfur atoms into the C-6 and C-8 positions of the octanoyl moiety bound to the lipoyl domains of lipoate-dependent enzymes, thereby converting the octanoylated domains into lipoylated derivatives. This Oryza sativa subsp. japonica (Rice) protein is Lipoyl synthase, mitochondrial.